The primary structure comprises 132 residues: Fumarate reductase subunit C (132 aa).

3 helical membrane-spanning segments follow: residues 36 to 56 (AIPT…LGSL), 70 to 90 (IVII…VTYY), and 110 to 130 (IITM…LVFM).

Belongs to the FrdC family. In terms of assembly, part of an enzyme complex containing four subunits: a flavoprotein (FrdA), an iron-sulfur protein (FrdB), and two hydrophobic anchor proteins (FrdC and FrdD).

It is found in the cell inner membrane. Functionally, anchors the catalytic components of the fumarate reductase complex to the cell membrane, binds quinones. In Pasteurella multocida (strain Pm70), this protein is Fumarate reductase subunit C.